The sequence spans 209 residues: Neurotrophin-4 (209 aa).

The N-terminal stretch at 1-21 (MLPRHSCSLLLFLLLLPSVPM) is a signal peptide. The propeptide occupies 22–79 (EPQPPSSTLPPFLAPEWDLLSPRVALSRGTPAGPPLLFLLEAGAYGEPAGAPANRSRR). N-linked (GlcNAc...) asparagine glycosylation is present at N75. 3 disulfides stabilise this stretch: C96–C169, C140–C198, and C157–C200.

The protein belongs to the NGF-beta family. Expressed in thymus, muscle, ovary, brain, heart, stomach and kidney. Expressed in both embryo and adult tissues.

Its subcellular location is the secreted. Target-derived survival factor for peripheral sensory sympathetic neurons. May promote ameloblast differentiation and subsequent reduction in proliferation of ameloblasts. This chain is Neurotrophin-4 (Ntf4), found in Rattus norvegicus (Rat).